Reading from the N-terminus, the 677-residue chain is Fidgetin-like protein 1 (677 aa).

The span at 203–216 (TSSAPSGESTTATF) shows a compositional bias: polar residues. 3 disordered regions span residues 203-232 (TSSA…PQSF), 249-324 (VPSG…SFNG), and 337-378 (GIFG…TDDR). Lys-226 is covalently cross-linked (Glycyl lysine isopeptide (Lys-Gly) (interchain with G-Cter in SUMO2)). A compositionally biased stretch (polar residues) spans 264–280 (DSDTINMLSNPTLNKAP). Basic and acidic residues predominate over residues 281-292 (SKTEDSGQREDN). Lys-341 carries the N6-acetyllysine modification. A compositionally biased stretch (polar residues) spans 347–358 (SNKQDGSEQNGN). ATP is bound by residues Ala-407 and 447 to 452 (GTGKTL).

It belongs to the AAA ATPase family. As to quaternary structure, hexamer. Interacts (via N-terminal one-half region) with RAD51; the interaction is direct. Interacts (via N-terminal one-half region) with SPIDR (via the C-terminal region); the interaction is direct. Interacts with FIRRM; may regulate homologous recombination. Mg(2+) serves as cofactor.

It localises to the nucleus. Its subcellular location is the cytoplasm. It is found in the perinuclear region. It catalyses the reaction ATP + H2O = ADP + phosphate + H(+). In terms of biological role, involved in DNA double-strand break (DBS) repair via homologous recombination (HR). Recruited at DSB sites independently of BRCA2, RAD51 and RAD51 paralogs in a H2AX-dependent manner. May regulate osteoblast proliferation and differentiation. May play a role in the control of male meiosis dynamic. The chain is Fidgetin-like protein 1 (Fignl1) from Rattus norvegicus (Rat).